A 497-amino-acid polypeptide reads, in one-letter code: Cobyric acid synthase (497 aa).

Positions 257–431 constitute a GATase cobBQ-type domain; sequence WLRVAAVRLP…WHGLLDNDDF (175 aa). Cys338 acts as the Nucleophile in catalysis. His423 is an active-site residue.

It belongs to the CobB/CobQ family. CobQ subfamily.

The protein operates within cofactor biosynthesis; adenosylcobalamin biosynthesis. Catalyzes amidations at positions B, D, E, and G on adenosylcobyrinic A,C-diamide. NH(2) groups are provided by glutamine, and one molecule of ATP is hydrogenolyzed for each amidation. The chain is Cobyric acid synthase from Mycolicibacterium paratuberculosis (strain ATCC BAA-968 / K-10) (Mycobacterium paratuberculosis).